Here is a 109-residue protein sequence, read N- to C-terminus: Movement protein (109 aa).

The disordered stretch occupies residues 1–28 (MDSFGRAPPLWPQSALPRVPGAAPSSSG). A helical transmembrane segment spans residues 34 to 54 (VGEIAIFTFVAVLALYLLWSW).

Belongs to the mastrevirus movement protein family. Interacts with the capsid protein (CP). Part of a MP-CP-viral DNA complex.

Its subcellular location is the host membrane. Its function is as follows. Involved in the viral transport within, and between cells. This is Movement protein from Sugarcane streak virus (isolate South Africa) (SSV).